Here is a 299-residue protein sequence, read N- to C-terminus: Recombination-associated protein RdgC (299 aa).

Belongs to the RdgC family.

The protein resides in the cytoplasm. The protein localises to the nucleoid. Functionally, may be involved in recombination. In Cupriavidus pinatubonensis (strain JMP 134 / LMG 1197) (Cupriavidus necator (strain JMP 134)), this protein is Recombination-associated protein RdgC.